The primary structure comprises 345 residues: Heat-inducible transcription repressor HrcA (345 aa).

It belongs to the HrcA family.

In terms of biological role, negative regulator of class I heat shock genes (grpE-dnaK-dnaJ and groELS operons). Prevents heat-shock induction of these operons. This is Heat-inducible transcription repressor HrcA from Listeria welshimeri serovar 6b (strain ATCC 35897 / DSM 20650 / CCUG 15529 / CIP 8149 / NCTC 11857 / SLCC 5334 / V8).